A 542-amino-acid chain; its full sequence is CTP synthase (542 aa).

Residues 1–265 form an amidoligase domain region; it reads MARYVFITGG…DDEVLAAFGI (265 aa). Ser-13 provides a ligand contact to CTP. Ser-13 lines the UTP pocket. Residues 14 to 19 and Asp-71 each bind ATP; that span reads SLGKGI. The Mg(2+) site is built by Asp-71 and Glu-139. CTP contacts are provided by residues 146–148, 186–191, and Lys-222; these read DIE and KTKPTQ. UTP is bound by residues 186-191 and Lys-222; that span reads KTKPTQ. One can recognise a Glutamine amidotransferase type-1 domain in the interval 291-541; it reads TIAIVGKYTG…IEAATEQSRL (251 aa). Residue Gly-353 coordinates L-glutamine. The active-site Nucleophile; for glutamine hydrolysis is Cys-380. Residues 381-384, Glu-404, and Arg-469 contribute to the L-glutamine site; that span reads FGMQ. Residues His-514 and Glu-516 contribute to the active site.

It belongs to the CTP synthase family. Homotetramer.

It catalyses the reaction UTP + L-glutamine + ATP + H2O = CTP + L-glutamate + ADP + phosphate + 2 H(+). It carries out the reaction L-glutamine + H2O = L-glutamate + NH4(+). The enzyme catalyses UTP + NH4(+) + ATP = CTP + ADP + phosphate + 2 H(+). The protein operates within pyrimidine metabolism; CTP biosynthesis via de novo pathway; CTP from UDP: step 2/2. With respect to regulation, allosterically activated by GTP, when glutamine is the substrate; GTP has no effect on the reaction when ammonia is the substrate. The allosteric effector GTP functions by stabilizing the protein conformation that binds the tetrahedral intermediate(s) formed during glutamine hydrolysis. Inhibited by the product CTP, via allosteric rather than competitive inhibition. Its function is as follows. Catalyzes the ATP-dependent amination of UTP to CTP with either L-glutamine or ammonia as the source of nitrogen. Regulates intracellular CTP levels through interactions with the four ribonucleotide triphosphates. The protein is CTP synthase of Rhizobium etli (strain CIAT 652).